The primary structure comprises 211 residues: Mediator of RNA polymerase II transcription subunit 20 (211 aa).

It belongs to the Mediator complex subunit 20 family. In terms of assembly, component of the Mediator complex.

Its subcellular location is the nucleus. Component of the Mediator complex, a coactivator involved in the regulated transcription of nearly all RNA polymerase II-dependent genes. Mediator functions as a bridge to convey information from gene-specific regulatory proteins to the basal RNA polymerase II transcription machinery. Mediator is recruited to promoters by direct interactions with regulatory proteins and serves as a scaffold for the assembly of a functional preinitiation complex with RNA polymerase II and the general transcription factors. This is Mediator of RNA polymerase II transcription subunit 20 (med20) from Xenopus laevis (African clawed frog).